The sequence spans 84 residues: Small ribosomal subunit protein uS17 (84 aa).

Belongs to the universal ribosomal protein uS17 family. Part of the 30S ribosomal subunit.

Functionally, one of the primary rRNA binding proteins, it binds specifically to the 5'-end of 16S ribosomal RNA. The protein is Small ribosomal subunit protein uS17 of Caldanaerobacter subterraneus subsp. tengcongensis (strain DSM 15242 / JCM 11007 / NBRC 100824 / MB4) (Thermoanaerobacter tengcongensis).